The chain runs to 606 residues: 4-hydroxy-3-methylbut-2-en-1-yl diphosphate synthase (flavodoxin) (606 aa).

Residues cysteine 513, cysteine 516, cysteine 547, and glutamate 554 each contribute to the [4Fe-4S] cluster site.

This sequence belongs to the IspG family. Requires [4Fe-4S] cluster as cofactor.

The enzyme catalyses (2E)-4-hydroxy-3-methylbut-2-enyl diphosphate + oxidized [flavodoxin] + H2O + 2 H(+) = 2-C-methyl-D-erythritol 2,4-cyclic diphosphate + reduced [flavodoxin]. The protein operates within isoprenoid biosynthesis; isopentenyl diphosphate biosynthesis via DXP pathway; isopentenyl diphosphate from 1-deoxy-D-xylulose 5-phosphate: step 5/6. Functionally, converts 2C-methyl-D-erythritol 2,4-cyclodiphosphate (ME-2,4cPP) into 1-hydroxy-2-methyl-2-(E)-butenyl 4-diphosphate. The polypeptide is 4-hydroxy-3-methylbut-2-en-1-yl diphosphate synthase (flavodoxin) (Chlamydia felis (strain Fe/C-56) (Chlamydophila felis)).